The primary structure comprises 782 residues: Endonuclease MutS2 (782 aa).

336 to 343 serves as a coordination point for ATP; the sequence is GPNTGGKT. In terms of domain architecture, Smr spans 707–782; that stretch reads LDLRGYRYED…GFGVTVATLK (76 aa).

It belongs to the DNA mismatch repair MutS family. MutS2 subfamily. In terms of assembly, homodimer. Binds to stalled ribosomes, contacting rRNA.

In terms of biological role, endonuclease that is involved in the suppression of homologous recombination and thus may have a key role in the control of bacterial genetic diversity. Acts as a ribosome collision sensor, splitting the ribosome into its 2 subunits. Detects stalled/collided 70S ribosomes which it binds and splits by an ATP-hydrolysis driven conformational change. Acts upstream of the ribosome quality control system (RQC), a ribosome-associated complex that mediates the extraction of incompletely synthesized nascent chains from stalled ribosomes and their subsequent degradation. Probably generates substrates for RQC. This chain is Endonuclease MutS2, found in Staphylococcus aureus (strain MSSA476).